Consider the following 360-residue polypeptide: S-adenosylmethionine decarboxylase proenzyme (360 aa).

Active-site residues include Glu13 and Glu16. Catalysis depends on Ser73, which acts as the Schiff-base intermediate with substrate; via pyruvic acid. A Pyruvic acid (Ser); by autocatalysis modification is found at Ser73. Catalysis depends on Cys87, which acts as the Proton donor; for catalytic activity. Residues Ser236 and His249 each act as proton acceptor; for processing activity in the active site.

This sequence belongs to the eukaryotic AdoMetDC family. Pyruvate is required as a cofactor. In terms of processing, is synthesized initially as an inactive proenzyme. Formation of the active enzyme involves a self-maturation process in which the active site pyruvoyl group is generated from an internal serine residue via an autocatalytic post-translational modification. Two non-identical subunits are generated from the proenzyme in this reaction, and the pyruvate is formed at the N-terminus of the alpha chain, which is derived from the carboxyl end of the proenzyme. The post-translation cleavage follows an unusual pathway, termed non-hydrolytic serinolysis, in which the side chain hydroxyl group of the serine supplies its oxygen atom to form the C-terminus of the beta chain, while the remainder of the serine residue undergoes an oxidative deamination to produce ammonia and the pyruvoyl group blocking the N-terminus of the alpha chain. In terms of tissue distribution, stolon, also expressed in leaves, stems and roots.

The enzyme catalyses S-adenosyl-L-methionine + H(+) = S-adenosyl 3-(methylsulfanyl)propylamine + CO2. The protein operates within amine and polyamine biosynthesis; S-adenosylmethioninamine biosynthesis; S-adenosylmethioninamine from S-adenosyl-L-methionine: step 1/1. The chain is S-adenosylmethionine decarboxylase proenzyme (SAMDC) from Solanum tuberosum (Potato).